A 94-amino-acid polypeptide reads, in one-letter code: Large ribosomal subunit protein uL23 (94 aa).

It belongs to the universal ribosomal protein uL23 family. Part of the 50S ribosomal subunit. Contacts protein L29, and trigger factor when it is bound to the ribosome.

In terms of biological role, one of the early assembly proteins it binds 23S rRNA. One of the proteins that surrounds the polypeptide exit tunnel on the outside of the ribosome. Forms the main docking site for trigger factor binding to the ribosome. The polypeptide is Large ribosomal subunit protein uL23 (Geobacter metallireducens (strain ATCC 53774 / DSM 7210 / GS-15)).